Reading from the N-terminus, the 142-residue chain is Large ribosomal subunit protein uL13 (142 aa).

The protein belongs to the universal ribosomal protein uL13 family. Part of the 50S ribosomal subunit.

Its function is as follows. This protein is one of the early assembly proteins of the 50S ribosomal subunit, although it is not seen to bind rRNA by itself. It is important during the early stages of 50S assembly. The sequence is that of Large ribosomal subunit protein uL13 from Vibrio campbellii (strain ATCC BAA-1116).